Here is a 541-residue protein sequence, read N- to C-terminus: Beta-hexosaminidase 1 (541 aa).

Positions methionine 1 to serine 20 are cleaved as a signal peptide. Asparagine 44 and asparagine 304 each carry an N-linked (GlcNAc...) asparagine glycan. Cysteines 295 and 337 form a disulfide. Catalysis depends on glutamate 332, which acts as the Proton donor. 3 N-linked (GlcNAc...) asparagine glycosylation sites follow: asparagine 340, asparagine 352, and asparagine 497. A disulfide bridge links cysteine 511 with cysteine 538.

This sequence belongs to the glycosyl hydrolase 20 family. N-glycosylated. In terms of tissue distribution, expressed in roots, leaves, stems, flowers and siliques.

It localises to the vacuole. The enzyme catalyses Hydrolysis of terminal non-reducing N-acetyl-D-hexosamine residues in N-acetyl-beta-D-hexosaminides.. Inhibited by N-acetylcastanospermine, 2-acet-amido-1,2-dideoxynojirimycin and PUGNAc. Has a broad substrate specificity. Can use synthetic substrates such as pyridylaminated chitotriose, pyridylaminated chitobiose, p-nitrophenyl-beta-N-acetylglucosaminide, p-nitrophenyl-2-acetamido-2-deoxy-beta-D-glucopyranoside (pNP-GlcNAc), p-nitrophenyl-2-acetamido-2-deoxy-beta-D-galactopyranoside (pNP-GalNAc), 4-methylumbelliferyl-2-acetamido-2-deoxy-beta-D-glucopyranoside (MU-GlcNAc), and 4-methylumbelliferyl-6-sulfo-2-acetamido-2-deoxy-beta-D-glucopyranoside (MU-GlcNAc-6SO(4)) as substrates. Removes terminal GlcNAc residues from alpha1,3- and alpha1,6-mannosyl branches of biantennary N-glycans without any strict branch preference. Required for the presence of paucimannosidic N-glycans in glycoproteins of roots and, to a lower extent, of leaves. The polypeptide is Beta-hexosaminidase 1 (HEXO1) (Arabidopsis thaliana (Mouse-ear cress)).